Reading from the N-terminus, the 212-residue chain is Glycerol-3-phosphate acyltransferase (212 aa).

5 helical membrane-spanning segments follow: residues 3 to 23, 69 to 89, 110 to 130, 143 to 163, and 165 to 185; these read LILL…LWIG, LLPM…FFAI, AGIL…IFFF, VIAA…HFLL, and DYDF…IIRH.

Belongs to the PlsY family. Probably interacts with PlsX.

The protein localises to the cell membrane. The enzyme catalyses an acyl phosphate + sn-glycerol 3-phosphate = a 1-acyl-sn-glycero-3-phosphate + phosphate. It functions in the pathway lipid metabolism; phospholipid metabolism. Catalyzes the transfer of an acyl group from acyl-phosphate (acyl-PO(4)) to glycerol-3-phosphate (G3P) to form lysophosphatidic acid (LPA). This enzyme utilizes acyl-phosphate as fatty acyl donor, but not acyl-CoA or acyl-ACP. This is Glycerol-3-phosphate acyltransferase from Streptococcus mutans serotype c (strain ATCC 700610 / UA159).